The chain runs to 744 residues: Cell division cycle protein 27 homolog B (744 aa).

The stretch at 101 to 134 (AAGHYLLGLIYKYTDRRKNAAQQFKQSLTIDPLL) is one TPR 1 repeat. Residues 180–199 (NEERNSTSTKNTSSEDYSPR) show a composition bias toward polar residues. Disordered regions lie at residues 180-218 (NEERNSTSTKNTSSEDYSPRQSKHTQSHGLKDISGNFHS) and 359-390 (ENMDEGVRGEPFDDSRPNTASTTGSMASNDQE). Residues 363–374 (EGVRGEPFDDSR) show a composition bias toward basic and acidic residues. Residues 375–387 (PNTASTTGSMASN) show a composition bias toward polar residues. TPR repeat units lie at residues 450–483 (GWVLSQVGKAYFELIDYLEAEKAFRLARLASPYC), 518–551 (PQSWCAMGNCYSLQKDHETALKNFLRAVQLNPRF), 553–585 (YAHTLCGHEYTTLEDFENGMKSYQNALRVDTRH), 587–619 (NAWYGLGMIYLRQEKLEFSEHHFRMAFLINPSS), 621–653 (VIMSYLGTSLHALKRSEEALEIMEQAIVADRKN), 655–687 (LPMYQKANILVCLERLDEALEVLEELKEYAPSE), and 688–721 (SSVYALMGRIYKRRNMHDKAMLHFGLALDMKPPA).

The protein belongs to the APC3/CDC27 family. As to quaternary structure, the APC/C is composed of at least 10 subunits. Can homodimerize. Interacts with APC2, APC10, FZR2 and FZR3. Interacts with PANS1. Interacts with SAMBA. In terms of tissue distribution, specifically expressed in dividing and elongating cells.

Its subcellular location is the nucleus. It participates in protein modification; protein ubiquitination. In terms of biological role, component of the anaphase promoting complex/cyclosome (APC/C), a cell cycle-regulated E3 ubiquitin-protein ligase complex that controls progression through mitosis and the G1 phase of the cell cycle. The APC/C complex controls several key steps in the cell cycle by mediating ubiquitination and subsequent degradation of target proteins such as cyclins. The APC/C complex is required for the female gametophyte development and is involved in several aspect of development by controlling cell division and cell elongation. Involved in the control of endoreduplication. Functionally redundant with CDC27A in the control of gametophyte development. In Arabidopsis thaliana (Mouse-ear cress), this protein is Cell division cycle protein 27 homolog B (CDC27B).